The following is a 177-amino-acid chain: Large ribosomal subunit protein uL6 (177 aa).

The protein belongs to the universal ribosomal protein uL6 family. In terms of assembly, part of the 50S ribosomal subunit.

This protein binds to the 23S rRNA, and is important in its secondary structure. It is located near the subunit interface in the base of the L7/L12 stalk, and near the tRNA binding site of the peptidyltransferase center. This is Large ribosomal subunit protein uL6 from Haemophilus ducreyi (strain 35000HP / ATCC 700724).